The sequence spans 1222 residues: DNA-directed RNA polymerase II subunit RPB2 (1222 aa).

Asp-835 contacts Mg(2+). The Zn(2+) site is built by Cys-1161, Cys-1164, Cys-1180, and Cys-1183. The C4-type zinc-finger motif lies at 1161–1183 (CGICGLMTVVAKLKHNQFECRGC).

This sequence belongs to the RNA polymerase beta chain family. As to quaternary structure, component of the RNA polymerase II (Pol II) complex consisting of 12 subunits.

The protein localises to the nucleus. It carries out the reaction RNA(n) + a ribonucleoside 5'-triphosphate = RNA(n+1) + diphosphate. In terms of biological role, DNA-dependent RNA polymerase catalyzes the transcription of DNA into RNA using the four ribonucleoside triphosphates as substrates. Second largest component of RNA polymerase II which synthesizes mRNA precursors and many functional non-coding RNAs. Proposed to contribute to the polymerase catalytic activity and forms the polymerase active center together with the largest subunit. Pol II is the central component of the basal RNA polymerase II transcription machinery. It is composed of mobile elements that move relative to each other. RPB2 is part of the core element with the central large cleft, the clamp element that moves to open and close the cleft and the jaws that are thought to grab the incoming DNA template. The polypeptide is DNA-directed RNA polymerase II subunit RPB2 (RPB2) (Eremothecium gossypii (strain ATCC 10895 / CBS 109.51 / FGSC 9923 / NRRL Y-1056) (Yeast)).